We begin with the raw amino-acid sequence, 718 residues long: Probable protein S-acyltransferase 19 (718 aa).

2 helical membrane passes run 16-36 (VVAI…FAPF) and 41-61 (IWEY…FVLY). The segment at 100–125 (ETGSHLQSSPSVASRTSTLPNSSVKG) is disordered. Residues 103-124 (SHLQSSPSVASRTSTLPNSSVK) are compositionally biased toward polar residues. The region spanning 174-224 (LFCTLCNAEVRKFSKHCRSCDKCVDCFDHHCRWLNNCVGRKNYMTFISLMA) is the DHHC domain. Catalysis depends on C204, which acts as the S-palmitoyl cysteine intermediate. Transmembrane regions (helical) follow at residues 222 to 242 (LMAV…AVIV) and 277 to 297 (AVSM…MLLI). 3 disordered regions span residues 454–511 (SSVS…HVHE), 598–649 (PATT…QQQQ), and 664–718 (GPLV…GTRK). Composition is skewed to polar residues over residues 479 to 488 (CRNSYAPSQG) and 598 to 626 (PATT…TQNP). Over residues 673–687 (DGLRHDGDSGREGQD) the composition is skewed to basic and acidic residues.

This sequence belongs to the DHHC palmitoyltransferase family.

Its subcellular location is the cell membrane. It carries out the reaction L-cysteinyl-[protein] + hexadecanoyl-CoA = S-hexadecanoyl-L-cysteinyl-[protein] + CoA. Palmitoyl acyltransferase. This is Probable protein S-acyltransferase 19 (PAT19) from Arabidopsis thaliana (Mouse-ear cress).